The following is a 232-amino-acid chain: Small ribosomal subunit protein uS3 (232 aa).

Residues 39–107 form the KH type-2 domain; that stretch reads VRQFLTKELS…PAQINIAEVR (69 aa).

Belongs to the universal ribosomal protein uS3 family. In terms of assembly, part of the 30S ribosomal subunit. Forms a tight complex with proteins S10 and S14.

Binds the lower part of the 30S subunit head. Binds mRNA in the 70S ribosome, positioning it for translation. This is Small ribosomal subunit protein uS3 from Sodalis glossinidius (strain morsitans).